The following is a 197-amino-acid chain: Small ribosomal subunit protein uS4 (197 aa).

Residues S88–N150 form the S4 RNA-binding domain.

This sequence belongs to the universal ribosomal protein uS4 family. Part of the 30S ribosomal subunit. Contacts protein S5. The interaction surface between S4 and S5 is involved in control of translational fidelity.

Functionally, one of the primary rRNA binding proteins, it binds directly to 16S rRNA where it nucleates assembly of the body of the 30S subunit. Its function is as follows. With S5 and S12 plays an important role in translational accuracy. In Azobacteroides pseudotrichonymphae genomovar. CFP2, this protein is Small ribosomal subunit protein uS4.